The sequence spans 299 residues: tRNA pseudouridine synthase B (299 aa).

Catalysis depends on aspartate 45, which acts as the Nucleophile.

This sequence belongs to the pseudouridine synthase TruB family. Type 1 subfamily.

The enzyme catalyses uridine(55) in tRNA = pseudouridine(55) in tRNA. Functionally, responsible for synthesis of pseudouridine from uracil-55 in the psi GC loop of transfer RNAs. In Streptomyces griseus subsp. griseus (strain JCM 4626 / CBS 651.72 / NBRC 13350 / KCC S-0626 / ISP 5235), this protein is tRNA pseudouridine synthase B.